We begin with the raw amino-acid sequence, 482 residues long: Putative transposase R186 (482 aa).

The Zn(2+) site is built by Cys416, Cys419, Cys433, and Cys435.

It in the central section; belongs to the transposase 2 family. In the C-terminal section; belongs to the transposase 35 family.

This Acanthamoeba polyphaga (Amoeba) protein is Putative transposase R186.